Here is a 384-residue protein sequence, read N- to C-terminus: Anhydro-N-acetylmuramic acid kinase (384 aa).

Residue 9 to 16 (GTSVDGID) participates in ATP binding.

This sequence belongs to the anhydro-N-acetylmuramic acid kinase family.

The enzyme catalyses 1,6-anhydro-N-acetyl-beta-muramate + ATP + H2O = N-acetyl-D-muramate 6-phosphate + ADP + H(+). It functions in the pathway amino-sugar metabolism; 1,6-anhydro-N-acetylmuramate degradation. It participates in cell wall biogenesis; peptidoglycan recycling. Functionally, catalyzes the specific phosphorylation of 1,6-anhydro-N-acetylmuramic acid (anhMurNAc) with the simultaneous cleavage of the 1,6-anhydro ring, generating MurNAc-6-P. Is required for the utilization of anhMurNAc either imported from the medium or derived from its own cell wall murein, and thus plays a role in cell wall recycling. This Rippkaea orientalis (strain PCC 8801 / RF-1) (Cyanothece sp. (strain PCC 8801)) protein is Anhydro-N-acetylmuramic acid kinase.